The primary structure comprises 323 residues: Acetyl esterase (323 aa).

The Involved in the stabilization of the negatively charged intermediate by the formation of the oxyanion hole signature appears at 91 to 93; sequence HGG. Active-site residues include S165, D262, and H292.

The protein belongs to the 'GDXG' lipolytic enzyme family. In terms of assembly, homodimer. Interacts with MalT and MelA.

The protein resides in the cytoplasm. Its function is as follows. Displays esterase activity towards short chain fatty esters (acyl chain length of up to 8 carbons). Able to hydrolyze triacetylglycerol (triacetin) and tributyrylglycerol (tributyrin), but not trioleylglycerol (triolein) or cholesterol oleate. Negatively regulates MalT activity by antagonizing maltotriose binding. Inhibits MelA galactosidase activity. This chain is Acetyl esterase, found in Salmonella agona (strain SL483).